Here is a 206-residue protein sequence, read N- to C-terminus: dITP/XTP pyrophosphatase (206 aa).

Residue 7-12 (SCHGYK) coordinates substrate. Aspartate 70 serves as the catalytic Proton acceptor. Aspartate 70 contributes to the Mg(2+) binding site. Residues threonine 71, 154–157 (FGYD), lysine 177, and 182–183 (HR) each bind substrate.

This sequence belongs to the HAM1 NTPase family. As to quaternary structure, homodimer. Mg(2+) is required as a cofactor.

It carries out the reaction XTP + H2O = XMP + diphosphate + H(+). The enzyme catalyses dITP + H2O = dIMP + diphosphate + H(+). The catalysed reaction is ITP + H2O = IMP + diphosphate + H(+). Functionally, pyrophosphatase that catalyzes the hydrolysis of nucleoside triphosphates to their monophosphate derivatives, with a high preference for the non-canonical purine nucleotides XTP (xanthosine triphosphate), dITP (deoxyinosine triphosphate) and ITP. Seems to function as a house-cleaning enzyme that removes non-canonical purine nucleotides from the nucleotide pool, thus preventing their incorporation into DNA/RNA and avoiding chromosomal lesions. This Chlamydia caviae (strain ATCC VR-813 / DSM 19441 / 03DC25 / GPIC) (Chlamydophila caviae) protein is dITP/XTP pyrophosphatase.